Consider the following 721-residue polypeptide: MSENKCPMHHSAGGTTNRDWWPKQLRLDILHQHSSLSNPMGDDFNYAEAFKSLDLAAVKQDLLALMTDSQDWWPADFGHYGPLFIRMAWHSAGTYRTGDGRGGAGSGNQRFAPLNSWPDNVSLDKARRLIWPIKQKYGNKISWADLIVLTGNVALESMGFKTLGFAGGRVDIWEPEADIYWGAEDKWLDDKRYSGERDLEDPLAAVQMGLIYVNPEGPNGDPDPFAAAVDIRETFARMAMNDEETVALIAGGHTFGKTHGAGDAALVGPEPEAASIEQQGLGWKSSYKSGKGGDAISSGLEVTWTSTPTQWSNNFFENLFGYEWELTKSPAGAHQWIPKNGAGKGVIPDAHDASKRHVPAMLTTDLALIFDPDYEKISRRLFENPDEFAEIFAKAWYKLTHRDMGPCTRYLGPEVPAEEFLWQDPIPAVDHPLVDEQDVTDLKLKIIGSGLTISEVVATAWASASTYRGSDMRGGANGARIRLAPQKDWPVNQPEQLAKVLKVLESIQSEFNKSGKKISLADLIVLAGCVGIDQAARNAGVEVTIPFTPGRMDATQAQTDVESFAVLEPVADGFRNYHPTQFSVSAEELLVDRAQLLTLTAPEMTVLIGGLRVLDTNADQSKTGVFTARPEFLTNDFFVNLLDMGTTWKPTSKAEDRFEGVDRVSGQPKWTASRVDLIFGSNSQLRALAEVYASSDAQLRFIDDFIAAWTKVMNLDRFDLR.

Positions 89 to 212 (WHSAGTYRTG…LAAVQMGLIY (124 aa)) form a cross-link, tryptophyl-tyrosyl-methioninium (Trp-Tyr) (with M-238). The active-site Proton acceptor is the H90. A cross-link (tryptophyl-tyrosyl-methioninium (Tyr-Met) (with W-89)) is located at residues 212 to 238 (YVNPEGPNGDPDPFAAAVDIRETFARM). Residue H253 coordinates heme b.

It belongs to the peroxidase family. Peroxidase/catalase subfamily. As to quaternary structure, homodimer or homotetramer. Heme b is required as a cofactor. Formation of the three residue Trp-Tyr-Met cross-link is important for the catalase, but not the peroxidase activity of the enzyme.

It carries out the reaction H2O2 + AH2 = A + 2 H2O. The enzyme catalyses 2 H2O2 = O2 + 2 H2O. Its function is as follows. Bifunctional enzyme with both catalase and broad-spectrum peroxidase activity. The sequence is that of Catalase-peroxidase from Shewanella baltica (strain OS195).